A 420-amino-acid polypeptide reads, in one-letter code: Glucose-1-phosphate adenylyltransferase (420 aa).

Residues Tyr107, Gly172, 187–188, and Ser205 contribute to the alpha-D-glucose 1-phosphate site; that span reads EK.

Belongs to the bacterial/plant glucose-1-phosphate adenylyltransferase family. In terms of assembly, homotetramer.

The catalysed reaction is alpha-D-glucose 1-phosphate + ATP + H(+) = ADP-alpha-D-glucose + diphosphate. It functions in the pathway glycan biosynthesis; glycogen biosynthesis. Functionally, involved in the biosynthesis of ADP-glucose, a building block required for the elongation reactions to produce glycogen. Catalyzes the reaction between ATP and alpha-D-glucose 1-phosphate (G1P) to produce pyrophosphate and ADP-Glc. The protein is Glucose-1-phosphate adenylyltransferase of Rhizobium meliloti (strain 1021) (Ensifer meliloti).